The following is a 429-amino-acid chain: Tryptophan synthase beta chain 2 (429 aa).

Lys-111 carries the post-translational modification N6-(pyridoxal phosphate)lysine.

This sequence belongs to the TrpB family. In terms of assembly, tetramer of two alpha and two beta chains. Requires pyridoxal 5'-phosphate as cofactor.

The catalysed reaction is (1S,2R)-1-C-(indol-3-yl)glycerol 3-phosphate + L-serine = D-glyceraldehyde 3-phosphate + L-tryptophan + H2O. Its pathway is amino-acid biosynthesis; L-tryptophan biosynthesis; L-tryptophan from chorismate: step 5/5. Functionally, the beta subunit is responsible for the synthesis of L-tryptophan from indole and L-serine. This Saccharolobus solfataricus (strain ATCC 35092 / DSM 1617 / JCM 11322 / P2) (Sulfolobus solfataricus) protein is Tryptophan synthase beta chain 2 (trpB2).